The primary structure comprises 339 residues: DNA-directed RNA polymerase subunit alpha (339 aa).

The segment at 1–233 (MVREEVAGST…DLFLPFLHAE (233 aa)) is alpha N-terminal domain (alpha-NTD). The alpha C-terminal domain (alpha-CTD) stretch occupies residues 264–339 (KKGIPLNCIF…IDLLKNKLSF (76 aa)).

The protein belongs to the RNA polymerase alpha chain family. As to quaternary structure, in plastids the minimal PEP RNA polymerase catalytic core is composed of four subunits: alpha, beta, beta', and beta''. When a (nuclear-encoded) sigma factor is associated with the core the holoenzyme is formed, which can initiate transcription.

The protein resides in the plastid. Its subcellular location is the chloroplast. It catalyses the reaction RNA(n) + a ribonucleoside 5'-triphosphate = RNA(n+1) + diphosphate. Its function is as follows. DNA-dependent RNA polymerase catalyzes the transcription of DNA into RNA using the four ribonucleoside triphosphates as substrates. This Agropyron cristatum (Crested wheatgrass) protein is DNA-directed RNA polymerase subunit alpha.